Reading from the N-terminus, the 273-residue chain is MCKLEKFNYALFGNPIDHSQSPKIHNFFATQTGILHIYKAINIPLDQFSSVVSDFFKKNIKGANVTAPFKKEAYFFSDKLTERAKIAQSVNTLKKISDKCILGDNTDGIGLLSDLVRLNFIKKNFSILILGAGGAVKGVLLPLLSLGCSVYILNRTILNAKILVKQFNKYGKIFVFDRQNFKQQNFDLVINAMSRNTEKKNFLPLSLITSKTFFYDMNYSTRNTPFINWCSKAGGSFISNGIGMLVFQAAYSFLEWHNVLPEINYIINILNIK.

Residues 19-21 and Thr66 each bind shikimate; that span reads SQS. Lys70 functions as the Proton acceptor in the catalytic mechanism. Glu82 provides a ligand contact to NADP(+). Shikimate-binding residues include Asn91 and Asp107. NADP(+) is bound by residues 131 to 135 and Met217; that span reads GAGGA. Tyr219 provides a ligand contact to shikimate. Gly241 serves as a coordination point for NADP(+).

This sequence belongs to the shikimate dehydrogenase family. Homodimer.

The enzyme catalyses shikimate + NADP(+) = 3-dehydroshikimate + NADPH + H(+). It functions in the pathway metabolic intermediate biosynthesis; chorismate biosynthesis; chorismate from D-erythrose 4-phosphate and phosphoenolpyruvate: step 4/7. Its function is as follows. Involved in the biosynthesis of the chorismate, which leads to the biosynthesis of aromatic amino acids. Catalyzes the reversible NADPH linked reduction of 3-dehydroshikimate (DHSA) to yield shikimate (SA). The polypeptide is Shikimate dehydrogenase (NADP(+)) (Buchnera aphidicola subsp. Schizaphis graminum (strain Sg)).